The following is a 319-amino-acid chain: 4-hydroxy-3-methylbut-2-enyl diphosphate reductase (319 aa).

Cysteine 12 serves as a coordination point for [4Fe-4S] cluster. (2E)-4-hydroxy-3-methylbut-2-enyl diphosphate is bound by residues histidine 41 and histidine 74. 2 residues coordinate dimethylallyl diphosphate: histidine 41 and histidine 74. The isopentenyl diphosphate site is built by histidine 41 and histidine 74. Cysteine 97 contacts [4Fe-4S] cluster. Histidine 125 contacts (2E)-4-hydroxy-3-methylbut-2-enyl diphosphate. Histidine 125 contacts dimethylallyl diphosphate. Histidine 125 lines the isopentenyl diphosphate pocket. The Proton donor role is filled by glutamate 127. Position 168 (threonine 168) interacts with (2E)-4-hydroxy-3-methylbut-2-enyl diphosphate. Cysteine 198 contacts [4Fe-4S] cluster. Residues serine 226, serine 227, asparagine 228, and serine 270 each coordinate (2E)-4-hydroxy-3-methylbut-2-enyl diphosphate. Residues serine 226, serine 227, asparagine 228, and serine 270 each coordinate dimethylallyl diphosphate. 4 residues coordinate isopentenyl diphosphate: serine 226, serine 227, asparagine 228, and serine 270.

It belongs to the IspH family. Homodimer. It depends on [4Fe-4S] cluster as a cofactor.

It catalyses the reaction isopentenyl diphosphate + 2 oxidized [2Fe-2S]-[ferredoxin] + H2O = (2E)-4-hydroxy-3-methylbut-2-enyl diphosphate + 2 reduced [2Fe-2S]-[ferredoxin] + 2 H(+). The catalysed reaction is dimethylallyl diphosphate + 2 oxidized [2Fe-2S]-[ferredoxin] + H2O = (2E)-4-hydroxy-3-methylbut-2-enyl diphosphate + 2 reduced [2Fe-2S]-[ferredoxin] + 2 H(+). Its pathway is isoprenoid biosynthesis; dimethylallyl diphosphate biosynthesis; dimethylallyl diphosphate from (2E)-4-hydroxy-3-methylbutenyl diphosphate: step 1/1. The protein operates within isoprenoid biosynthesis; isopentenyl diphosphate biosynthesis via DXP pathway; isopentenyl diphosphate from 1-deoxy-D-xylulose 5-phosphate: step 6/6. Its function is as follows. Catalyzes the conversion of 1-hydroxy-2-methyl-2-(E)-butenyl 4-diphosphate (HMBPP) into a mixture of isopentenyl diphosphate (IPP) and dimethylallyl diphosphate (DMAPP). Acts in the terminal step of the DOXP/MEP pathway for isoprenoid precursor biosynthesis. The polypeptide is 4-hydroxy-3-methylbut-2-enyl diphosphate reductase (Hamiltonella defensa subsp. Acyrthosiphon pisum (strain 5AT)).